Reading from the N-terminus, the 199-residue chain is Cytochrome c oxidase subunit 2 (199 aa).

Residues 1 to 13 form a helical membrane-spanning segment; sequence AICSLVLYLLTLM. At 14-26 the chain is on the mitochondrial matrix side; the sequence is LMEKLSSNSVDAQ. A helical transmembrane segment spans residues 27-54; the sequence is EVELVWTILPAIVLILLALPSLQILYMM. Residues 55–199 lie on the Mitochondrial intermembrane side of the membrane; it reads DEIDEPDLTL…SSLLSTSSSL (145 aa). 6 residues coordinate Cu cation: His128, Cys163, Glu165, Cys167, His171, and Met174. A Mg(2+)-binding site is contributed by Glu165.

This sequence belongs to the cytochrome c oxidase subunit 2 family. As to quaternary structure, component of the cytochrome c oxidase (complex IV, CIV), a multisubunit enzyme composed of 14 subunits. The complex is composed of a catalytic core of 3 subunits MT-CO1, MT-CO2 and MT-CO3, encoded in the mitochondrial DNA, and 11 supernumerary subunits COX4I, COX5A, COX5B, COX6A, COX6B, COX6C, COX7A, COX7B, COX7C, COX8 and NDUFA4, which are encoded in the nuclear genome. The complex exists as a monomer or a dimer and forms supercomplexes (SCs) in the inner mitochondrial membrane with NADH-ubiquinone oxidoreductase (complex I, CI) and ubiquinol-cytochrome c oxidoreductase (cytochrome b-c1 complex, complex III, CIII), resulting in different assemblies (supercomplex SCI(1)III(2)IV(1) and megacomplex MCI(2)III(2)IV(2)). Found in a complex with TMEM177, COA6, COX18, COX20, SCO1 and SCO2. Interacts with TMEM177 in a COX20-dependent manner. Interacts with COX20. Interacts with COX16. Cu cation serves as cofactor.

It is found in the mitochondrion inner membrane. The enzyme catalyses 4 Fe(II)-[cytochrome c] + O2 + 8 H(+)(in) = 4 Fe(III)-[cytochrome c] + 2 H2O + 4 H(+)(out). Its function is as follows. Component of the cytochrome c oxidase, the last enzyme in the mitochondrial electron transport chain which drives oxidative phosphorylation. The respiratory chain contains 3 multisubunit complexes succinate dehydrogenase (complex II, CII), ubiquinol-cytochrome c oxidoreductase (cytochrome b-c1 complex, complex III, CIII) and cytochrome c oxidase (complex IV, CIV), that cooperate to transfer electrons derived from NADH and succinate to molecular oxygen, creating an electrochemical gradient over the inner membrane that drives transmembrane transport and the ATP synthase. Cytochrome c oxidase is the component of the respiratory chain that catalyzes the reduction of oxygen to water. Electrons originating from reduced cytochrome c in the intermembrane space (IMS) are transferred via the dinuclear copper A center (CU(A)) of subunit 2 and heme A of subunit 1 to the active site in subunit 1, a binuclear center (BNC) formed by heme A3 and copper B (CU(B)). The BNC reduces molecular oxygen to 2 water molecules using 4 electrons from cytochrome c in the IMS and 4 protons from the mitochondrial matrix. This is Cytochrome c oxidase subunit 2 (MT-CO2) from Apteryx australis (Southern brown kiwi).